The following is a 227-amino-acid chain: Germin-like protein subfamily 1 member 3 (227 aa).

The signal sequence occupies residues 1–24 (MKYPFQCFLAKIILLALASSFVSC). Cysteine 34 and cysteine 50 are joined by a disulfide. A Cupin type-1 domain is found at 64–212 (SGLNIPGNTN…AFALDINIVR (149 aa)). 3 residues coordinate Mn(2+): histidine 109, histidine 111, and glutamate 116. Asparagine 136 is a glycosylation site (N-linked (GlcNAc...) asparagine). Histidine 160 is a binding site for Mn(2+).

This sequence belongs to the germin family. As to quaternary structure, oligomer (believed to be a pentamer but probably hexamer).

Its subcellular location is the secreted. It is found in the extracellular space. It localises to the apoplast. Functionally, may play a role in plant defense. Probably has no oxalate oxidase activity even if the active site is conserved. The chain is Germin-like protein subfamily 1 member 3 from Arabidopsis thaliana (Mouse-ear cress).